Reading from the N-terminus, the 273-residue chain is Large ribosomal subunit protein uL2 (273 aa).

Positions 221–262 (RGTAMNPVDHPHGGGEGRNFGKHPVTPWGVQTKGKKTRHNKR) are disordered. A compositionally biased stretch (basic residues) spans 253 to 262 (KGKKTRHNKR).

This sequence belongs to the universal ribosomal protein uL2 family. In terms of assembly, part of the 50S ribosomal subunit. Forms a bridge to the 30S subunit in the 70S ribosome.

Functionally, one of the primary rRNA binding proteins. Required for association of the 30S and 50S subunits to form the 70S ribosome, for tRNA binding and peptide bond formation. It has been suggested to have peptidyltransferase activity; this is somewhat controversial. Makes several contacts with the 16S rRNA in the 70S ribosome. This is Large ribosomal subunit protein uL2 from Haemophilus influenzae (strain ATCC 51907 / DSM 11121 / KW20 / Rd).